A 268-amino-acid chain; its full sequence is Magnesium dechelatase SGR1, chloroplastic (268 aa).

The N-terminal 48 residues, 1-48 (MCSLSAIMLLPTKLKPAYSDKRSNSSSSSSLFFNNRRSKKKNQSIVPV), are a transit peptide targeting the chloroplast.

This sequence belongs to the staygreen family. Interacts with HCAR, the chlorophyll catabolic enzymes (CCEs) NYC1, PAO and RCCR, and the LHCII complex. Part of a SGR1-CCE-LHCII complex, which acts in chlorophyll breakdown. Expressed in roots, leaves, seeds, flowers, buds, petals, sepals and siliques.

It is found in the plastid. The protein localises to the chloroplast thylakoid membrane. It catalyses the reaction chlorophyll a + 2 H(+) = pheophytin a + Mg(2+). Its function is as follows. Magnesium chelatase involved in chlorophyll a degradation in the chlorophyll-protein complexes of photosystem I (PSI) and photosystem II (PSII). Contributes to the degradation of PSI and PSII in the thylakoid membranes. Required to trigger chlorophyll degradation during natural and dark-induced leaf senescence. Mediates chlorophyll degradation during embryo degreening. Recombinant SGR1 possesses high dechelating activity against chlorophyll a, very low activity against chlorophyllide a, and no activity against chlorophyll b. Magnesium dechelation of chlorophyll a by SGR1 activates chlorophyll b degradation by inducing the expression of NYC1, an enzyme involved in chlorophyll b degradation. In Arabidopsis thaliana (Mouse-ear cress), this protein is Magnesium dechelatase SGR1, chloroplastic.